We begin with the raw amino-acid sequence, 478 residues long: RNA-binding protein 42 (478 aa).

A compositionally biased stretch (low complexity) spans 1–20 (MASAMAGAGPAPGLPVAGGP). Residues 1-33 (MASAMAGAGPAPGLPVAGGPVVPGPGVGIPGKS) form a disordered region. The residue at position 2 (alanine 2) is an N-acetylalanine. Serine 133 is subject to Phosphoserine. Asymmetric dimethylarginine is present on residues arginine 151, arginine 156, arginine 166, and arginine 179. Disordered stretches follow at residues 171–209 (LSSA…PPMA) and 317–354 (SLRP…PEKL). A compositionally biased stretch (pro residues) spans 193–205 (PPLPGPPGPPMML). The interval 234–478 (DLGLGLGLGL…QKEKKKLGLR (245 aa)) is necessary for interaction with HNRNPK. The span at 343-354 (GEDKKKGKPEKL) shows a compositional bias: basic and acidic residues. Residues 379-457 (FRIFCGDLGN…RPIKLRKSMW (79 aa)) enclose the RRM domain.

The protein belongs to the RRM RBM42 family. Interacts with HNRNPK.

The protein resides in the nucleus. It is found in the cytoplasm. Its function is as follows. Binds (via the RRM domain) to the 3' untranslated region (UTR) of p21 mRNA. The protein is RNA-binding protein 42 (Rbm42) of Rattus norvegicus (Rat).